The following is a 366-amino-acid chain: Histidinol-phosphate aminotransferase (366 aa).

K228 carries the N6-(pyridoxal phosphate)lysine modification.

The protein belongs to the class-II pyridoxal-phosphate-dependent aminotransferase family. Histidinol-phosphate aminotransferase subfamily. Homodimer. Pyridoxal 5'-phosphate serves as cofactor.

The enzyme catalyses L-histidinol phosphate + 2-oxoglutarate = 3-(imidazol-4-yl)-2-oxopropyl phosphate + L-glutamate. It functions in the pathway amino-acid biosynthesis; L-histidine biosynthesis; L-histidine from 5-phospho-alpha-D-ribose 1-diphosphate: step 7/9. In Corynebacterium glutamicum (strain ATCC 13032 / DSM 20300 / JCM 1318 / BCRC 11384 / CCUG 27702 / LMG 3730 / NBRC 12168 / NCIMB 10025 / NRRL B-2784 / 534), this protein is Histidinol-phosphate aminotransferase.